The chain runs to 471 residues: Probable pyruvate, phosphate dikinase regulatory protein, chloroplastic (471 aa).

The transit peptide at 1–49 directs the protein to the chloroplast; sequence MSSSSSTSPRFGSMISAKLASPPPSLLLPPSPRLQGRRLTPPSCTPGTP. The tract at residues 1–133 is disordered; it reads MSSSSSTSPR…PHPSSDEAAS (133 aa). The segment covering 21 to 32 has biased composition (pro residues); the sequence is SPPPSLLLPPSP. Over residues 71–88 the composition is skewed to polar residues; that stretch reads GSATTPRSPAQLGSSQLH. Over residues 89-99 the composition is skewed to basic residues; that stretch reads RWSRARAHRSG. Basic and acidic residues predominate over residues 100–111; it reads RRLEWPTIRDRG. 171 to 178 serves as a coordination point for ADP; the sequence is HSVNAALG.

This sequence belongs to the pyruvate, phosphate/water dikinase regulatory protein family. PDRP subfamily.

It localises to the plastid. The protein localises to the chloroplast. The catalysed reaction is N(tele)-phospho-L-histidyl/L-threonyl-[pyruvate, phosphate dikinase] + ADP = N(tele)-phospho-L-histidyl/O-phospho-L-threonyl-[pyruvate, phosphate dikinase] + AMP + H(+). The enzyme catalyses N(tele)-phospho-L-histidyl/O-phospho-L-threonyl-[pyruvate, phosphate dikinase] + phosphate + H(+) = N(tele)-phospho-L-histidyl/L-threonyl-[pyruvate, phosphate dikinase] + diphosphate. With respect to regulation, regulated by light/dark exposure. Functionally, bifunctional serine/threonine kinase and phosphorylase involved in the dark/light-mediated regulation of PPDK by catalyzing its phosphorylation/dephosphorylation. Dark/light-induced changes in stromal concentrations of the competing ADP and Pi substrates govern the direction of the reaction. In the dark, phosphorylates the catalytic intermediate of PPDK (PPDK-HisP), inactivating it. Light exposure induces the phosphorolysis reaction that reactivates PPDK. The chain is Probable pyruvate, phosphate dikinase regulatory protein, chloroplastic (PDRP1) from Oryza sativa subsp. indica (Rice).